A 412-amino-acid polypeptide reads, in one-letter code: CapZ-interacting protein (412 aa).

2 disordered regions span residues 1 to 84 (MEER…KSSP) and 99 to 412 (ALLP…DTRM). The segment covering 7-20 (ETNSNVDSSAQPSV) has biased composition (polar residues). Residues serine 68, serine 82, serine 83, serine 105, serine 108, serine 116, serine 120, and serine 123 each carry the phosphoserine modification. Threonine 124 is subject to Phosphothreonine. Phosphoserine is present on residues serine 126, serine 127, serine 135, and serine 143. Positions 159 to 176 (VRTRGSIKRRPPSRRFRR) are enriched in basic residues. Residues serine 177, serine 179, and serine 216 each carry the phosphoserine modification. Threonine 243 and threonine 256 each carry phosphothreonine. A compositionally biased stretch (basic and acidic residues) spans 248-258 (EKPEELVRTPE). The residue at position 297 (serine 297) is a Phosphoserine. 2 stretches are compositionally biased toward basic and acidic residues: residues 298 to 312 (PREETTPGEHTDTGK) and 319 to 330 (SEERVADEDRLG). 2 positions are modified to phosphoserine: serine 333 and serine 401.

In terms of assembly, interacts with CAPZA2 and CAPZB. In terms of processing, dephosphorylation results in its dissociation from CAPZA2.

Functionally, stress-induced phosphorylation of CAPZIP may regulate the ability of F-actin-capping protein to remodel actin filament assembly. In Mus musculus (Mouse), this protein is CapZ-interacting protein (Rcsd1).